The primary structure comprises 391 residues: MTLSSNQYQLPLNVRPYTTTWCSQSPSCSNLLAIGHDTGITIYCASEEQTPGSTGLTLQELFTIQTGLPTLHLSFSSSCSYSENLHDGDGNVNSSPVYSLFLACVCQDNTVRLIITKNETIITQHVLGGKSGHHNFVNDIDIADVYSADNRLAEQVIASVGDDCTLIIWRLTDEGPILAGYPLSSPGISVQFRPSNPNQLIVGERNGNIRIFDWTLNLSAEENSQTELVKNPWLLTLNTLPLVNTCHSSGIASSLANVRWIGSDGSGILAMCKSGAWLRWNLFANNDYNEISDSTMKLGPKNLLPNVQGISLFPSLLGACPHPRYMDYFATAHSQHGLIQLINTYEKDSNSIPIQLGMPIVDFCWHQDGSHLAIATEGSVLLTRLMGFTRL.

WD repeat units lie at residues V137–A179 and P182–E222.

Its subcellular location is the cytoplasm. It localises to the nucleus. This is an uncharacterized protein from Schizosaccharomyces pombe (strain 972 / ATCC 24843) (Fission yeast).